A 119-amino-acid chain; its full sequence is Protein Wnt-4 (119 aa).

Ser-1 carries the O-palmitoleoyl serine; by PORCN lipid modification. Disulfide bonds link Cys-69–Cys-100 and Cys-85–Cys-95. Residue Asn-86 is glycosylated (N-linked (GlcNAc...) asparagine).

This sequence belongs to the Wnt family. Palmitoleoylation is required for efficient binding to frizzled receptors. Depalmitoleoylation leads to Wnt signaling pathway inhibition.

Its subcellular location is the secreted. The protein resides in the extracellular space. It is found in the extracellular matrix. Ligand for members of the frizzled family of seven transmembrane receptors. Plays an important role in embryonic development. This is Protein Wnt-4 (WNT-4) from Eptatretus stoutii (Pacific hagfish).